Reading from the N-terminus, the 473-residue chain is Catalase easC (473 aa).

Over residues 1–15 (MASEVSVASSGSEHS) the composition is skewed to low complexity. Residues 1–31 (MASEVSVASSGSEHSGAQKCPFQDPGLSSMD) form a disordered region. Residue His-54 is part of the active site. Tyr-344 serves as a coordination point for heme. A disordered region spans residues 369 to 388 (DGARPEKAEMAPQKVPSQEH).

Belongs to the catalase family. It depends on heme as a cofactor.

It participates in alkaloid biosynthesis; ergot alkaloid biosynthesis. Its function is as follows. Catalase; part of the gene cluster that mediates the biosynthesis of fungal ergot alkaloid. DmaW catalyzes the first step of ergot alkaloid biosynthesis by condensing dimethylallyl diphosphate (DMAP) and tryptophan to form 4-dimethylallyl-L-tryptophan. The second step is catalyzed by the methyltransferase easF that methylates 4-dimethylallyl-L-tryptophan in the presence of S-adenosyl-L-methionine, resulting in the formation of 4-dimethylallyl-L-abrine. The catalase easC and the FAD-dependent oxidoreductase easE then transform 4-dimethylallyl-L-abrine to chanoclavine-I which is further oxidized by easD in the presence of NAD(+), resulting in the formation of chanoclavine-I aldehyde. Agroclavine dehydrogenase easG then mediates the conversion of chanoclavine-I aldehyde to agroclavine via a non-enzymatic adduct reaction: the substrate is an iminium intermediate that is formed spontaneously from chanoclavine-I aldehyde in the presence of glutathione. The presence of easA is not required to complete this reaction. Further conversion of agroclavine to paspalic acid is a two-step process involving oxidation of agroclavine to elymoclavine and of elymoclavine to paspalic acid, the second step being performed by the elymoclavine oxidase cloA. Paspalic acid is then further converted to D-lysergic acid. Ergopeptines are assembled from D-lysergic acid and three different amino acids by the D-lysergyl-peptide-synthetases composed each of a monomudular and a trimodular nonribosomal peptide synthetase subunit. LpsB and lpsC encode the monomodular subunits responsible for D-lysergic acid activation and incorporation into the ergopeptine backbone. LpsA1 and A2 subunits encode the trimodular nonribosomal peptide synthetase assembling the tripeptide portion of ergopeptines. LpsA1 is responsible for formation of the major ergopeptine, ergotamine, and lpsA2 for alpha-ergocryptine, the minor ergopeptine of the total alkaloid mixture elaborated by C.purpurea. D-lysergyl-tripeptides are assembled by the nonribosomal peptide synthetases and released as N-(D-lysergyl-aminoacyl)-lactams. Cyclolization of the D-lysergyl-tripeptides is performed by the Fe(2+)/2-ketoglutarate-dependent dioxygenase easH which introduces a hydroxyl group into N-(D-lysergyl-aminoacyl)-lactam at alpha-C of the aminoacyl residue followed by spontaneous condensation with the terminal lactam carbonyl group. This chain is Catalase easC, found in Claviceps purpurea (Ergot fungus).